The sequence spans 475 residues: MASATASISSHSVALRDLKAARIGAVKQQVAAAPAAGTAAARAQRARAVRPLRAAEPARQPVSASAAAAPAAAPVAEDAAAAAVDAPAPAVDYEALAQELQGASPLEIMDRALAMFGSDIAIAFSGAEDVALIEYAKLTGRPFRVFSLDTGRLNPETYQLFDKVEKHYGIRIEYMFPDAGEVQALVRAKGLFSFYEDGHQECCRARKVRPLRRALRGLRAWITGQRKDQSPGTRAAIPVVQVDPSFEGLAGGAGSLVKWNPVANVDGKDVWTFLRAMDVPVNALHAQGYVSIGCEPCTRPVLPGQHEREGRWWWEDAKAKECGLHKGNIDDQGGAAAAAAHKAGGANGNGSAGAPDIFESSGVVSLTRAGVENLLRLESRAEPWLVVLYAPWCPFCQAMEASYLELAERLGGAGGGVKVGKFRADGEQKAFAQQELQLQSFPTILLFPSRTARPIKYPSEKRDVDSLLAFVNSLR.

The transit peptide at 1–63 (MASATASISS…AAEPARQPVS (63 aa)) directs the protein to the chloroplast. Positions 72 to 327 (AAPVAEDAAA…KAKECGLHKG (256 aa)) are reductase domain. One can recognise a Thioredoxin domain in the interval 341–475 (HKAGGANGNG…SLLAFVNSLR (135 aa)). Catalysis depends on nucleophile residues Cys-393 and Cys-396. An intrachain disulfide couples Cys-393 to Cys-396.

It belongs to the APS reductase family. It depends on [4Fe-4S] cluster as a cofactor.

The protein localises to the plastid. It is found in the chloroplast. The catalysed reaction is glutathione disulfide + sulfite + AMP + 2 H(+) = adenosine 5'-phosphosulfate + 2 glutathione. Functionally, reduces sulfate for Cys biosynthesis. The sequence is that of Probable 5'-adenylylsulfate reductase 1, chloroplastic (APR1) from Oryza sativa subsp. japonica (Rice).